Reading from the N-terminus, the 297-residue chain is 3-mercaptopyruvate sulfurtransferase (297 aa).

The residue at position 2 (alanine 2) is an N-acetylalanine. Serine 3, tryptophan 15, proline 23, and serine 35 each carry phosphoserine. The Rhodanese 1 domain occupies 25 to 144 (AGQPLQLLDA…WLRQNLPLSS (120 aa)). The residue at position 40 (lysine 40) is an N6-acetyllysine; alternate. At lysine 40 the chain carries N6-succinyllysine; alternate. The tract at residues 145–160 (GKSQPAPAEFRAQLDP) is hinge. N6-succinyllysine is present on residues lysine 146 and lysine 164. Residues 174-288 (ESRRFQVVDS…WYMRARPEDV (115 aa)) enclose the Rhodanese 2 domain. Arginine 188 provides a ligand contact to substrate. The active-site Cysteine persulfide intermediate is the cysteine 248.

As to quaternary structure, monomer (active form). Homodimer; disulfide-linked (inactive form).

It is found in the cytoplasm. It localises to the mitochondrion. The protein localises to the synapse. Its subcellular location is the synaptosome. It carries out the reaction 2-oxo-3-sulfanylpropanoate + [thioredoxin]-dithiol = [thioredoxin]-disulfide + hydrogen sulfide + pyruvate + H(+). With respect to regulation, by oxidative stress, and thioredoxin. Under oxidative stress conditions, the catalytic cysteine site is converted to a sulfenate which inhibits the MPST enzyme activity. Reduced thioredoxin cleaves an intersubunit disulfide bond to turn on the redox switch and reactivate the enzyme. Transfer of a sulfur ion to cyanide or to other thiol compounds. Also has weak rhodanese activity. Detoxifies cyanide and is required for thiosulfate biosynthesis. Acts as an antioxidant. In combination with cysteine aminotransferase (CAT), contributes to the catabolism of cysteine and is an important producer of hydrogen sulfide in the brain, retina and vascular endothelial cells. Hydrogen sulfide H(2)S is an important synaptic modulator, signaling molecule, smooth muscle contractor and neuroprotectant. Its production by the 3MST/CAT pathway is regulated by calcium ions. The polypeptide is 3-mercaptopyruvate sulfurtransferase (MPST) (Homo sapiens (Human)).